Here is a 240-residue protein sequence, read N- to C-terminus: Sugar fermentation stimulation protein homolog (240 aa).

Belongs to the SfsA family.

The protein is Sugar fermentation stimulation protein homolog of Saccharolobus islandicus (strain L.S.2.15 / Lassen #1) (Sulfolobus islandicus).